The sequence spans 98 residues: UPF0473 protein GTNG_2486 (98 aa).

The protein belongs to the UPF0473 family.

In Geobacillus thermodenitrificans (strain NG80-2), this protein is UPF0473 protein GTNG_2486.